The primary structure comprises 287 residues: ATP synthase gamma chain (287 aa).

This sequence belongs to the ATPase gamma chain family. In terms of assembly, F-type ATPases have 2 components, CF(1) - the catalytic core - and CF(0) - the membrane proton channel. CF(1) has five subunits: alpha(3), beta(3), gamma(1), delta(1), epsilon(1). CF(0) has three main subunits: a, b and c.

Its subcellular location is the cell inner membrane. Functionally, produces ATP from ADP in the presence of a proton gradient across the membrane. The gamma chain is believed to be important in regulating ATPase activity and the flow of protons through the CF(0) complex. This Ruthia magnifica subsp. Calyptogena magnifica protein is ATP synthase gamma chain.